Reading from the N-terminus, the 408-residue chain is 1-deoxy-D-xylulose 5-phosphate reductoisomerase (408 aa).

Residues threonine 26, glycine 27, serine 28, isoleucine 29, and asparagine 143 each coordinate NADPH. Lysine 144 is a binding site for 1-deoxy-D-xylulose 5-phosphate. An NADPH-binding site is contributed by glutamate 145. Position 167 (aspartate 167) interacts with Mn(2+). Serine 168, glutamate 169, serine 193, and histidine 216 together coordinate 1-deoxy-D-xylulose 5-phosphate. Mn(2+) is bound at residue glutamate 169. Residue glycine 222 coordinates NADPH. 4 residues coordinate 1-deoxy-D-xylulose 5-phosphate: serine 229, asparagine 234, lysine 235, and glutamate 238. Glutamate 238 contributes to the Mn(2+) binding site.

Belongs to the DXR family. It depends on Mg(2+) as a cofactor. Requires Mn(2+) as cofactor.

The catalysed reaction is 2-C-methyl-D-erythritol 4-phosphate + NADP(+) = 1-deoxy-D-xylulose 5-phosphate + NADPH + H(+). Its pathway is isoprenoid biosynthesis; isopentenyl diphosphate biosynthesis via DXP pathway; isopentenyl diphosphate from 1-deoxy-D-xylulose 5-phosphate: step 1/6. Functionally, catalyzes the NADPH-dependent rearrangement and reduction of 1-deoxy-D-xylulose-5-phosphate (DXP) to 2-C-methyl-D-erythritol 4-phosphate (MEP). The chain is 1-deoxy-D-xylulose 5-phosphate reductoisomerase from Corynebacterium jeikeium (strain K411).